The following is a 482-amino-acid chain: GTPase Obg (482 aa).

Residues 2–159 enclose the Obg domain; the sequence is PRFVDRVVIH…VDLTLELKTV (158 aa). The region spanning 160-340 is the OBG-type G domain; it reads ADVGLVGFPS…LTFALWEMIV (181 aa). Residues 166 to 173, 191 to 195, 212 to 215, 292 to 295, and 321 to 323 each bind GTP; these read GFPSAGKS, FTTLV, DVPG, NKVD, and STL. Residues serine 173 and threonine 193 each coordinate Mg(2+). The OCT domain occupies 358–438; it reads PIPVDESGFT…IGDMTFDWEP (81 aa). The interval 441 to 482 is disordered; the sequence is PAGVDVTMSGRGTDARIDKTDRVGAAERRQARRVRRGQVEPE. A compositionally biased stretch (basic and acidic residues) spans 453-469; the sequence is TDARIDKTDRVGAAERR.

This sequence belongs to the TRAFAC class OBG-HflX-like GTPase superfamily. OBG GTPase family. As to quaternary structure, monomer. It depends on Mg(2+) as a cofactor.

Its subcellular location is the cytoplasm. Its function is as follows. An essential GTPase which binds GTP, GDP and possibly (p)ppGpp with moderate affinity, with high nucleotide exchange rates and a fairly low GTP hydrolysis rate. Plays a role in control of the cell cycle, stress response, ribosome biogenesis and in those bacteria that undergo differentiation, in morphogenesis control. This chain is GTPase Obg, found in Mycobacteroides abscessus (strain ATCC 19977 / DSM 44196 / CCUG 20993 / CIP 104536 / JCM 13569 / NCTC 13031 / TMC 1543 / L948) (Mycobacterium abscessus).